The chain runs to 305 residues: Putative lipid kinase USA300HOU_0749 (305 aa).

One can recognise a DAGKc domain in the interval 3-139 (NKYTHGVLFY…YDVIKINNQY (137 aa)). ATP-binding positions include Ser44, 74–80 (GDGTVNE), and Thr101. Residues Ser220, Asp223, and Glu225 each contribute to the Mg(2+) site. The active-site Proton acceptor is Glu281.

It belongs to the diacylglycerol/lipid kinase family. Mg(2+) serves as cofactor.

May catalyze the ATP-dependent phosphorylation of lipids other than diacylglycerol (DAG). The sequence is that of Putative lipid kinase USA300HOU_0749 from Staphylococcus aureus (strain USA300 / TCH1516).